The sequence spans 546 residues: EH domain-containing protein 2 (546 aa).

EF-hand domains are found at residues 15–50 (EHQK…SKLS) and 51–84 (RQEL…VSLA). Residues 16–94 (HQKIYKEWFN…QEGHEITSDL (79 aa)) enclose the EH domain. Residues Asp28, Asp30, Asp32, Arg34, Asp39, Asp62, and Glu73 each coordinate Ca(2+). Positions 194–430 (FDAKPMVMLL…LLADLMDVPK (237 aa)) constitute a Dynamin-type G domain. Residues 204-211 (GQYSTGKT) form a G1 motif region. Residue 204 to 211 (GQYSTGKT) participates in GTP binding. A G2 motif region spans residues 230-231 (EP). The G3 motif stretch occupies residues 292-295 (DTPG). Residues 292–296 (DTPGV) and Lys359 contribute to the GTP site. Positions 358-361 (NKAD) are G4 motif. Val382 is a region of interest (G5 motif). GTP is bound at residue 395–398 (SFND). A Nuclear localization signal motif is present at residues 429–436 (PKKACDRK). Residues 467-490 (KSKAQQRLMDNLEEEFGKVQREFH) adopt a coiled-coil conformation.

This sequence belongs to the TRAFAC class dynamin-like GTPase superfamily. Dynamin/Fzo/YdjA family. EHD subfamily. In terms of assembly, homooligomer, and heterooligomer with EHD1. Interacts with AP-4 complex subunit sigma (At2g19790).

The protein resides in the endosome membrane. Its subcellular location is the cell membrane. It localises to the nucleus. The protein localises to the cytoplasm. The catalysed reaction is GTP + H2O = GDP + phosphate + H(+). In terms of biological role, involved in endocytosis negative regulation, probably by influencing actin organization. Acts in early endocytic membrane fusion and membrane trafficking of recycling endosomes. Exhibits an inhibitory effect on endocytosis when over-expressed. The sequence is that of EH domain-containing protein 2 from Arabidopsis thaliana (Mouse-ear cress).